A 349-amino-acid chain; its full sequence is Phenylalanine--tRNA ligase alpha subunit (349 aa).

Residue Glu259 participates in Mg(2+) binding.

Belongs to the class-II aminoacyl-tRNA synthetase family. Phe-tRNA synthetase alpha subunit type 1 subfamily. As to quaternary structure, tetramer of two alpha and two beta subunits. The cofactor is Mg(2+).

The protein localises to the cytoplasm. The enzyme catalyses tRNA(Phe) + L-phenylalanine + ATP = L-phenylalanyl-tRNA(Phe) + AMP + diphosphate + H(+). This is Phenylalanine--tRNA ligase alpha subunit from Lactobacillus johnsonii (strain CNCM I-12250 / La1 / NCC 533).